We begin with the raw amino-acid sequence, 475 residues long: ATP synthase subunit beta, chloroplastic (475 aa).

An ATP-binding site is contributed by Gly-156 to Thr-163.

The protein belongs to the ATPase alpha/beta chains family. As to quaternary structure, F-type ATPases have 2 components, CF(1) - the catalytic core - and CF(0) - the membrane proton channel. CF(1) has five subunits: alpha(3), beta(3), gamma(1), delta(1), epsilon(1). CF(0) has four main subunits: a(1), b(1), b'(1) and c(9-12).

The protein resides in the plastid. The protein localises to the chloroplast thylakoid membrane. It catalyses the reaction ATP + H2O + 4 H(+)(in) = ADP + phosphate + 5 H(+)(out). In terms of biological role, produces ATP from ADP in the presence of a proton gradient across the membrane. The catalytic sites are hosted primarily by the beta subunits. The polypeptide is ATP synthase subunit beta, chloroplastic (Trieres chinensis (Marine centric diatom)).